A 163-amino-acid polypeptide reads, in one-letter code: NADH-quinone oxidoreductase subunit I (163 aa).

4Fe-4S ferredoxin-type domains lie at 54 to 84 (LRRY…IDAE) and 94 to 123 (TRYD…EGPN). Cys-64, Cys-67, Cys-70, Cys-74, Cys-103, Cys-106, Cys-109, and Cys-113 together coordinate [4Fe-4S] cluster.

It belongs to the complex I 23 kDa subunit family. As to quaternary structure, NDH-1 is composed of at least 14 different subunits, Nqo1 to Nqo14. The complex has a L-shaped structure, with the hydrophobic arm (subunits Nqo7, Nqo8, Nqo10 to Nqo14) embedded in the inner membrane and the hydrophilic peripheral arm (subunits Nqo1 to Nqo6, Nqo9) protruding into the bacterial cytoplasm. The hydrophilic domain contains all the redox centers. NADH-quinone oxidoreductase forms a supercomplex with ubiquinol-cytochrome c reductase complex (complex III or cytochrome b-c1 complex) and cytochrome c oxidase (complex IV), which stabilizes the NADH-quinone oxidoreductase complex. It depends on [4Fe-4S] cluster as a cofactor.

The protein resides in the cell inner membrane. It catalyses the reaction a quinone + NADH + 5 H(+)(in) = a quinol + NAD(+) + 4 H(+)(out). Functionally, NDH-1 shuttles electrons from NADH, via FMN and iron-sulfur (Fe-S) centers, to quinones in the respiratory chain. The immediate electron acceptor for the enzyme in this species is believed to be ubiquinone. Couples the redox reaction to proton translocation (for every two electrons transferred, four hydrogen ions are translocated across the cytoplasmic membrane), and thus conserves the redox energy in a proton gradient. The chain is NADH-quinone oxidoreductase subunit I from Paracoccus denitrificans (strain Pd 1222).